A 185-amino-acid chain; its full sequence is Small ribosomal subunit protein uS7 (185 aa).

The protein belongs to the universal ribosomal protein uS7 family. Part of the 30S ribosomal subunit.

One of the primary rRNA binding proteins, it binds directly to 16S rRNA where it nucleates assembly of the head domain of the 30S subunit. Is located at the subunit interface close to the decoding center. In Methanothrix thermoacetophila (strain DSM 6194 / JCM 14653 / NBRC 101360 / PT) (Methanosaeta thermophila), this protein is Small ribosomal subunit protein uS7.